The chain runs to 339 residues: Ketol-acid reductoisomerase (NADP(+)) (339 aa).

Positions 1-182 (MRVYYDRDAD…GGGRSGVIET (182 aa)) constitute a KARI N-terminal Rossmann domain. NADP(+) is bound by residues 24-27 (YGSQ), Arg-48, Ser-51, Thr-53, and 83-86 (DELQ). His-108 is an active-site residue. Gly-134 is an NADP(+) binding site. The region spanning 183-328 (TFKEECETDL…GKLRAMMPWI (146 aa)) is the KARI C-terminal knotted domain. The Mg(2+) site is built by Asp-191, Glu-195, Glu-227, and Glu-231. Ser-252 serves as a coordination point for substrate.

Belongs to the ketol-acid reductoisomerase family. The cofactor is Mg(2+).

It catalyses the reaction (2R)-2,3-dihydroxy-3-methylbutanoate + NADP(+) = (2S)-2-acetolactate + NADPH + H(+). It carries out the reaction (2R,3R)-2,3-dihydroxy-3-methylpentanoate + NADP(+) = (S)-2-ethyl-2-hydroxy-3-oxobutanoate + NADPH + H(+). Its pathway is amino-acid biosynthesis; L-isoleucine biosynthesis; L-isoleucine from 2-oxobutanoate: step 2/4. It functions in the pathway amino-acid biosynthesis; L-valine biosynthesis; L-valine from pyruvate: step 2/4. In terms of biological role, involved in the biosynthesis of branched-chain amino acids (BCAA). Catalyzes an alkyl-migration followed by a ketol-acid reduction of (S)-2-acetolactate (S2AL) to yield (R)-2,3-dihydroxy-isovalerate. In the isomerase reaction, S2AL is rearranged via a Mg-dependent methyl migration to produce 3-hydroxy-3-methyl-2-ketobutyrate (HMKB). In the reductase reaction, this 2-ketoacid undergoes a metal-dependent reduction by NADPH to yield (R)-2,3-dihydroxy-isovalerate. This Brucella melitensis biotype 2 (strain ATCC 23457) protein is Ketol-acid reductoisomerase (NADP(+)).